Consider the following 283-residue polypeptide: Pantothenate synthetase (283 aa).

ATP is bound at residue 30 to 37 (MGNLHDGH). His-37 acts as the Proton donor in catalysis. A (R)-pantoate-binding site is contributed by Gln-61. Gln-61 contacts beta-alanine. 149–152 (GEKD) is an ATP binding site. Gln-155 is a binding site for (R)-pantoate. 186–189 (LSSR) contacts ATP.

Belongs to the pantothenate synthetase family. In terms of assembly, homodimer.

Its subcellular location is the cytoplasm. The catalysed reaction is (R)-pantoate + beta-alanine + ATP = (R)-pantothenate + AMP + diphosphate + H(+). The protein operates within cofactor biosynthesis; (R)-pantothenate biosynthesis; (R)-pantothenate from (R)-pantoate and beta-alanine: step 1/1. In terms of biological role, catalyzes the condensation of pantoate with beta-alanine in an ATP-dependent reaction via a pantoyl-adenylate intermediate. The polypeptide is Pantothenate synthetase (Escherichia coli O157:H7).